The following is a 169-amino-acid chain: MAWFTTVLIVASLLGSLVAQPITYTLVPTSSIPSQPTTSNERNKSCRLAIEELGALVQLLKELSSDESSGARLSEDVIVKLVNALIYVATYTCKGTGYNTTPLDILCDGVCGVGAGRGAEMEGKPRSGAGKGAEMEGKPKSTESVAETNTVAAGTGVVAEKTGTESSAS.

An N-terminal signal peptide occupies residues 1–19 (MAWFTTVLIVASLLGSLVA). Tetradecapeptide repeat units lie at residues 114–127 (GAGR…KPRS) and 128–141 (GAGK…KPKS). Residues 119–169 (AEMEGKPRSGAGKGAEMEGKPKSTESVAETNTVAAGTGVVAEKTGTESSAS) form a disordered region. Residues 142 to 152 (TESVAETNTVA) show a composition bias toward polar residues.

Functionally, this protein is one of two components of the prominent 'filler' that helps mold the shape of aeropyle crowns. This chain is Chorion protein E1, found in Antheraea polyphemus (Polyphemus moth).